Consider the following 473-residue polypeptide: Kremen protein 1 (473 aa).

The N-terminal stretch at 1 to 19 (MAPPAARLALLSAAALTLA) is a signal peptide. The Extracellular segment spans residues 21-392 (RPAPSPGLGP…AGSHRVEGWT (372 aa)). Positions 31–114 (ECFTANGADY…YWKYCEIPAC (84 aa)) constitute a Kringle domain. 8 disulfide bridges follow: Cys-32/Cys-114, Cys-55/Cys-95, Cys-84/Cys-109, Cys-122/Cys-186, Cys-147/Cys-167, Cys-151/Cys-169, Cys-190/Cys-198, and Cys-214/Cys-240. N-linked (GlcNAc...) asparagine glycans are attached at residues Asn-45 and Asn-59. In terms of domain architecture, WSC spans 116-210 (MPGNLGCYKD…DGRIILFDTL (95 aa)). The region spanning 214–321 (CGGNYSAMSS…QGFAVLYQAV (108 aa)) is the CUB domain. N-linked (GlcNAc...) asparagine glycosylation is found at Asn-217, Asn-293, Asn-333, and Asn-345. A helical membrane pass occupies residues 393-413 (VYGLATLLILTVTAIVAKILL). The Cytoplasmic segment spans residues 414 to 473 (HVTFKSHRVPASGDLRDCHQPGTSGEIWSIFYKPSTSISIFKKKLKGQSQQDDRNPLVSD). The essential for apoptotic activity stretch occupies residues 414 to 473 (HVTFKSHRVPASGDLRDCHQPGTSGEIWSIFYKPSTSISIFKKKLKGQSQQDDRNPLVSD).

As to quaternary structure, forms a ternary complex with DKK1 and LRP6. Interacts with LRP6 in a DKK1-dependent manner. Interacts with DKK1 and RSPO1 (via FU repeats).

The protein localises to the cell membrane. Functionally, receptor for Dickkopf proteins. Cooperates with DKK1/2 to inhibit Wnt/beta-catenin signaling by promoting the endocytosis of Wnt receptors LRP5 and LRP6. In the absence of DKK1, potentiates Wnt-beta-catenin signaling by maintaining LRP5 or LRP6 at the cell membrane. Can trigger apoptosis in a Wnt-independent manner and this apoptotic activity is inhibited upon binding of the ligand DKK1. Plays a role in limb development; attenuates Wnt signaling in the developing limb to allow normal limb patterning and can also negatively regulate bone formation. Modulates cell fate decisions in the developing cochlea with an inhibitory role in hair cell fate specification. The protein is Kremen protein 1 (KREMEN1) of Homo sapiens (Human).